A 261-amino-acid chain; its full sequence is Basic leucine zipper 19 (261 aa).

2 disordered regions span residues 1–22 (MEDGELDFSNQEVFSSSEMGEL) and 74–100 (ESDEKVSTDDTAESCGKKGEKRPLGNR). Polar residues predominate over residues 8 to 18 (FSNQEVFSSSE). The span at 88–100 (CGKKGEKRPLGNR) shows a compositional bias: basic and acidic residues. The bZIP domain occupies 89-155 (GKKGEKRPLG…SRLKCLLVDL (67 aa)). A basic motif region spans residues 90-113 (KKGEKRPLGNREAVRKYREKKKAK). The segment at 117 to 131 (LEDEVARLRAVNQQL) is leucine-zipper. Residues 237-248 (NGSFSNVNTSVS) show a composition bias toward low complexity. The tract at residues 237–261 (NGSFSNVNTSVSNKRKGGHRASRAV) is disordered. Over residues 249–261 (NKRKGGHRASRAV) the composition is skewed to basic residues.

The protein localises to the nucleus. Functionally, transcription factor involved in the response to zinc ion deficiency. Binds to the consensus sequence 5'-[AG]TGTCGACA[CT]-3' also called zinc deficiency response element (ZDRE). The ZDRE sequence is conserved in the plant kingdom and present in the promoters of genes that constitute the primary response to zinc deficiency, comprising additional ZIP metal transporter genes. Required for zinc accumulation in roots. Mediates the expression of the zinc transporters ZIP3, ZIP4, ZIP5 and ZIP9 during growth in zinc-deficient conditions. ZIP9 transporter is involved in zinc uptake in roots. The protein is Basic leucine zipper 19 of Arabidopsis thaliana (Mouse-ear cress).